Consider the following 434-residue polypeptide: ATP-sensitive inward rectifier potassium channel 14 (434 aa).

Residues 1 to 81 (MGLARALRRL…LSDLFTTCVD (81 aa)) lie on the Cytoplasmic side of the membrane. Cys79 bears the S-nitrosocysteine mark. The chain crosses the membrane as a helical span at residues 82 to 108 (VRWRWMCLLFSCSFLASWLLFGLTFWL). Topologically, residues 109 to 131 (IASLHGDLAAPPPPAPCFSQVAS) are extracellular. An intramembrane region (helical; Pore-forming) is located at residues 132 to 148 (FLAAFLFALETQTSIGY). Positions 145–150 (SIGYGV) match the Selectivity filter motif. The Extracellular portion of the chain corresponds to 149–157 (GVRSVTEEC). Residues 158–185 (PAAVAAVVLQCIAGCVLDAFVVGAVMAK) traverse the membrane as a helical segment. At 186–434 (MAKPKKRNET…TPTLALTLPP (249 aa)) the chain is on the cytoplasmic side. The interval 398–434 (QEEDEEEDTKEGTSAETPERAASPQALTPTLALTLPP) is disordered. The segment covering 407-416 (KEGTSAETPE) has biased composition (basic and acidic residues). The span at 418-434 (AASPQALTPTLALTLPP) shows a compositional bias: low complexity.

This sequence belongs to the inward rectifier-type potassium channel (TC 1.A.2.1) family. KCNJ14 subfamily.

The protein resides in the membrane. It carries out the reaction K(+)(in) = K(+)(out). Channel activity is regulated by variations of cytosolic pH; channels are activated by alkaline and inhibited by acidic pH values. Inhibited by Ba(2+) and Cs(+) in a voltage-dependent manner; sensitivity to those inhibitors is lower than in other Kir channels. Functionally, inward rectifier potassium channels are characterized by a greater tendency to allow potassium to flow into the cell rather than out of it. Their voltage dependence is regulated by the concentration of extracellular potassium; as external potassium is raised, the voltage range of the channel opening shifts to more positive voltages. This is ATP-sensitive inward rectifier potassium channel 14 (Kcnj14) from Mus musculus (Mouse).